The following is a 260-amino-acid chain: Hydroxyethylthiazole kinase 1 (260 aa).

Residue M39 participates in substrate binding. R115 and T160 together coordinate ATP. A substrate-binding site is contributed by G187.

This sequence belongs to the Thz kinase family. The cofactor is Mg(2+).

It carries out the reaction 5-(2-hydroxyethyl)-4-methylthiazole + ATP = 4-methyl-5-(2-phosphooxyethyl)-thiazole + ADP + H(+). It participates in cofactor biosynthesis; thiamine diphosphate biosynthesis; 4-methyl-5-(2-phosphoethyl)-thiazole from 5-(2-hydroxyethyl)-4-methylthiazole: step 1/1. In terms of biological role, catalyzes the phosphorylation of the hydroxyl group of 4-methyl-5-beta-hydroxyethylthiazole (THZ). This chain is Hydroxyethylthiazole kinase 1, found in Streptococcus pneumoniae (strain Taiwan19F-14).